Reading from the N-terminus, the 635-residue chain is BTB/POZ domain-containing protein SETH6 (635 aa).

Positions 39-104 constitute a BTB domain; sequence SDLTIEVGSA…CYGVGVQYNS (66 aa). One can recognise an NPH3 domain in the interval 206-494; the sequence is DWWGRSLPIL…VQVLFYEQTR (289 aa). Tyr-435 bears the Phosphotyrosine mark. The disordered stretch occupies residues 604–635; the sequence is QSVASSGKKHTEEKTNSERRFMFQKRRCHSVS. The segment covering 612-624 has biased composition (basic and acidic residues); the sequence is KHTEEKTNSERRF. The segment covering 625–635 has biased composition (basic residues); it reads MFQKRRCHSVS.

Belongs to the NPH3 family.

The protein operates within protein modification; protein ubiquitination. Its function is as follows. May act as a substrate-specific adapter of an E3 ubiquitin-protein ligase complex (CUL3-RBX1-BTB) which mediates the ubiquitination and subsequent proteasomal degradation of target proteins. This is BTB/POZ domain-containing protein SETH6 (SETH6) from Arabidopsis thaliana (Mouse-ear cress).